A 165-amino-acid polypeptide reads, in one-letter code: Neurotrophin-3 (165 aa).

A signal peptide spans 1–3 (IQS). Positions 4-119 (TSMDQGSLSE…VLNQTSRRKR (116 aa)) are excised as a propeptide. The N-linked (GlcNAc...) asparagine glycan is linked to N112.

This sequence belongs to the NGF-beta family.

The protein localises to the secreted. Its function is as follows. Seems to promote the survival of visceral and proprioceptive sensory neurons. This is Neurotrophin-3 (NTF3) from Aspidites melanocephalus (Black-headed python).